Here is a 224-residue protein sequence, read N- to C-terminus: Glutathione S-transferase D7 (224 aa).

Residues 2–83 (PNLDLYNFPM…YLVEKYGKPD (82 aa)) enclose the GST N-terminal domain. Residues 53–55 (HTI) and 67–69 (ESR) each bind glutathione. The 121-residue stretch at 90–210 (DPQKRALINQ…LESLQQGKKF (121 aa)) folds into the GST C-terminal domain.

This sequence belongs to the GST superfamily. Delta family. In terms of assembly, homodimer.

It catalyses the reaction RX + glutathione = an S-substituted glutathione + a halide anion + H(+). In terms of biological role, conjugation of reduced glutathione to a wide number of exogenous and endogenous hydrophobic electrophiles. May be involved in detoxification. The chain is Glutathione S-transferase D7 from Drosophila melanogaster (Fruit fly).